The chain runs to 198 residues: Virion membrane protein A17 precursor homolog (198 aa).

Residues M1 to N55 lie on the Virion surface side of the membrane. Residues I56–N76 traverse the membrane as a helical segment. Residues T77 to R145 are Intravirion-facing. The chain crosses the membrane as a helical span at residues A146–D166. Residues R167 to Y198 lie on the Virion surface side of the membrane. Y198 is modified (phosphotyrosine).

This sequence belongs to the chordopoxvirinae A17 family. As to quaternary structure, interacts (via N-terminus) with D13 scaffold; this interaction helps D13 to associate with membranes. Interacts with A14. Interacts with A27; this interaction allows A27 to be anchored in the mature virion (MV) membrane. Part of a complex composed of A17, A25, A26 and A27. The 22 kDa precursor is probably cleaved by the I7 protease during virus maturation. In terms of processing, phosphorylated on tyrosine and threonine. Its phosphorylation state is regulated by the F10 kinase and the H1 phosphatase. Phosphorylation by F10 kinase seems to be required to form the membranes associated with IV.

The protein localises to the virion membrane. Envelope protein which participates in virus morphogenesis. Needed for an early step in viral crescent membrane formation by interacting with D13 scaffold protein. Its interaction with D13 scaffold protein leads to the formation of rigid, crescent-shaped membranes that assemble around the cytoplasmic virus factory. Membrane anchor for the protein A27. A17-A27 virus envelope protein might be involved in fusion or attachment, and can further associate to A26. This chain is Virion membrane protein A17 precursor homolog, found in Fowlpox virus (strain NVSL) (FPV).